The following is a 126-amino-acid chain: Phosphoribosyl-ATP pyrophosphatase (126 aa).

The protein belongs to the PRA-PH family.

The protein localises to the cytoplasm. The catalysed reaction is 1-(5-phospho-beta-D-ribosyl)-ATP + H2O = 1-(5-phospho-beta-D-ribosyl)-5'-AMP + diphosphate + H(+). Its pathway is amino-acid biosynthesis; L-histidine biosynthesis; L-histidine from 5-phospho-alpha-D-ribose 1-diphosphate: step 2/9. In Variovorax paradoxus (strain S110), this protein is Phosphoribosyl-ATP pyrophosphatase.